We begin with the raw amino-acid sequence, 140 residues long: Large ribosomal subunit protein bL17 (140 aa).

It belongs to the bacterial ribosomal protein bL17 family. Part of the 50S ribosomal subunit. Contacts protein L32.

The sequence is that of Large ribosomal subunit protein bL17 from Paracoccus denitrificans (strain Pd 1222).